Here is a 388-residue protein sequence, read N- to C-terminus: Sulfate adenylyltransferase (388 aa).

Belongs to the sulfate adenylyltransferase family.

It carries out the reaction sulfate + ATP + H(+) = adenosine 5'-phosphosulfate + diphosphate. It functions in the pathway sulfur metabolism; hydrogen sulfide biosynthesis; sulfite from sulfate: step 1/3. This Trichodesmium erythraeum (strain IMS101) protein is Sulfate adenylyltransferase.